We begin with the raw amino-acid sequence, 392 residues long: Speckle-type POZ protein-like A (392 aa).

The MATH domain occupies 31-161; it reads KFSYMWTINN…DDKLTLFCEV (131 aa). The 68-residue stretch at 200 to 267 folds into the BTB domain; the sequence is TDCSLYVGGQ…IYTGKAPNLE (68 aa).

The protein belongs to the Tdpoz family. As to quaternary structure, homodimer. Heterodimer with SPOP. Component of cullin-RING-based BCR (BTB-CUL3-RBX1) E3 ubiquitin-protein ligase complexes containing homodimeric SPOPL or the heterodimer formed by SPOP and SPOPL.

It is found in the nucleus. It functions in the pathway protein modification; protein ubiquitination. Its function is as follows. Component of a cullin-RING-based BCR (BTB-CUL3-RBX1) E3 ubiquitin-protein ligase complex that mediates the ubiquitination and subsequent proteasomal degradation of target proteins, but with relatively low efficiency. The sequence is that of Speckle-type POZ protein-like A (spopla) from Danio rerio (Zebrafish).